The sequence spans 144 residues: Flagellar assembly factor FliW (144 aa).

The protein belongs to the FliW family. Interacts with translational regulator CsrA and flagellin(s).

Its subcellular location is the cytoplasm. Functionally, acts as an anti-CsrA protein, binds CsrA and prevents it from repressing translation of its target genes, one of which is flagellin. Binds to flagellin and participates in the assembly of the flagellum. The chain is Flagellar assembly factor FliW from Geobacillus kaustophilus (strain HTA426).